The chain runs to 199 residues: Charged multivesicular body protein 1b (199 aa).

2 coiled-coil regions span residues 10-48 (NLKFAAKELNRNSKRCDKEEKAEKAKIKKAIQKGNMEVA) and 178-199 (TSVASAEQDELSQRLARLRDQV). The tract at residues 167–199 (ELPQGQTGSVGTSVASAEQDELSQRLARLRDQV) is disordered. The segment covering 170–182 (QGQTGSVGTSVAS) has biased composition (polar residues). The MIT-interacting motif motif lies at 186–196 (DELSQRLARLR).

This sequence belongs to the SNF7 family. Probable peripherally associated component of the endosomal sorting required for transport complex III (ESCRT-III).

The protein localises to the cytoplasm. It localises to the cytosol. It is found in the endosome. Its subcellular location is the late endosome membrane. Probable peripherally associated component of the endosomal sorting required for transport complex III (ESCRT-III) which is involved in multivesicular bodies (MVBs) formation and sorting of endosomal cargo proteins into MVBs. MVBs contain intraluminal vesicles (ILVs) that are generated by invagination and scission from the limiting membrane of the endosome and mostly are delivered to lysosomes enabling degradation of membrane proteins, such as stimulated growth factor receptors, lysosomal enzymes and lipids. This chain is Charged multivesicular body protein 1b (CHMP1B), found in Gallus gallus (Chicken).